The chain runs to 28 residues: Conotoxin Cl9b (28 aa).

Residues proline 17 and proline 28 each carry the 4-hydroxyproline modification.

Contains 3 disulfide bonds. In terms of tissue distribution, expressed by the venom duct.

Its subcellular location is the secreted. The sequence is that of Conotoxin Cl9b from Californiconus californicus (California cone).